A 417-amino-acid chain; its full sequence is Actin-related protein 10 (417 aa).

This sequence belongs to the actin family. As to quaternary structure, subunit of dynactin, a multiprotein complex part of a tripartite complex with dynein and a adapter, such as BICDL1, BICD2 or HOOK3. The dynactin complex is built around ACTR1A/ACTB filament and consists of an actin-related filament composed of a shoulder domain, a pointed end and a barbed end. Its length is defined by its flexible shoulder domain. The soulder is composed of 2 DCTN1 subunits, 4 DCTN2 and 2 DCTN3. The 4 DCNT2 (via N-terminus) bind the ACTR1A filament and act as molecular rulers to determine the length. The pointed end is important for binding dynein-dynactin cargo adapters. Consists of 4 subunits: ACTR10, DCNT4, DCTN5 and DCTN6. The barbed end is composed of a CAPZA1:CAPZB heterodimers, which binds ACTR1A/ACTB filament and dynactin and stabilizes dynactin.

Its subcellular location is the cytoplasm. It is found in the cytoskeleton. Functionally, part of the dynactin complex that activates the molecular motor dynein for ultra-processive transport along microtubules. The protein is Actin-related protein 10 (Actr10) of Mus musculus (Mouse).